Reading from the N-terminus, the 868-residue chain is MADVTVKQLAQVVGIPVERLLNQLQEAGLSFTDDQQTVNEEQKRILLNHLKGSSNRDISAAPERITLRRKSMSQVTVGHDMHSGKTVNIEVRKKKTFIKRSAIPEQAEVEEPVVPPVVEEPAHEEITVVSEVSADTSELKETEEHPVIEPVAALDETVKEEEKINSEENTAESQDELTHANTDVIENLVDVVEEAIPVSKKEEVKPEKVSKKKHLEQTDSDISEFKKGKKKPKYHTFEHDEEEQELHRRGGRSKFKKKKGTEKSDKYREAEETLTHGFALPTAPIVREVLIPETITVAELAKRMSVKAAEVIKVMMSLGAMATINQVIDQETSVIVVEEMGHKPVIIKEDAVETGLGEAISKGTKTEGRAPVVTIMGHVDHGKTSLLDYIRRTKVAAGEAGGITQHIGAYHVSTPKGDITFLDTPGHAAFTAMRARGAQATDIVILIVAADDGVKPQTIEAIQHAKAAKVPIIVAINKMDKPDADPERVMNELSVQEVIPEAWGGDTMFVNISAKSGMGIDDLLDAILLQSEVLELKAVTDGAAKGVVIESRLDKGRGPVATVLVQSGTLHKGDILLAGFQYGRVRALVSDNGDLVDSAGPSIPVEVLGLSAIPHAGDEAVVVPDEKKAREVALFRQGRFRDVKLARRQKTTIEGIMENMTATESKVLNIVLKADVQGSLEAISDALTKLSTDEVKVEVISSGVGGITESDVHLAIASNAILIGFNVRADGTAKRLAEQESVSIHYYSVIYDIVDQIKGALTGMLAPQFKEEIVGIAEVRDVFKSPKIGAIAGCMVIEGVVKRNNPIRVLRSNVVIYEGTLESLRRFKDDVLEVRQGFECGIGVKNYNDVKPGDLIEVFETVEIKRDL.

Disordered stretches follow at residues 158–178 (VKEE…DELT) and 200–269 (KKEE…KYRE). Positions 200 to 209 (KKEEVKPEKV) are enriched in basic and acidic residues. Basic residues predominate over residues 249 to 260 (RGGRSKFKKKKG). Residues 368–537 (GRAPVVTIMG…LLQSEVLELK (170 aa)) form the tr-type G domain. Residues 377 to 384 (GHVDHGKT) are G1. A GTP-binding site is contributed by 377 to 384 (GHVDHGKT). A G2 region spans residues 402–406 (GITQH). Residues 423–426 (DTPG) form a G3 region. GTP is bound by residues 423-427 (DTPGH) and 477-480 (NKMD). Residues 477–480 (NKMD) are G4. The G5 stretch occupies residues 513-515 (SAK).

Belongs to the TRAFAC class translation factor GTPase superfamily. Classic translation factor GTPase family. IF-2 subfamily.

The protein localises to the cytoplasm. One of the essential components for the initiation of protein synthesis. Protects formylmethionyl-tRNA from spontaneous hydrolysis and promotes its binding to the 30S ribosomal subunits. Also involved in the hydrolysis of GTP during the formation of the 70S ribosomal complex. The polypeptide is Translation initiation factor IF-2 (Legionella pneumophila (strain Lens)).